A 567-amino-acid chain; its full sequence is WD repeat-containing protein 20 (567 aa).

N-acetylalanine is present on Ala2. 4 WD repeats span residues 147 to 187 (IDKS…GTTA), 216 to 257 (VGEG…GTMK), 258 to 297 (SYFGGLLCLCWSPDGKYIVTGGEDDLVTVWSFLDCRVIAR), and 345 to 389 (STQS…LFPH). 2 positions are modified to phosphoserine: Ser355 and Ser358. The disordered stretch occupies residues 408-441 (PAGSNGSAVTTPGNSVPPPLPRSNSLPHSAVSNA). 2 stretches are compositionally biased toward polar residues: residues 411-421 (SNGSAVTTPGN) and 429-441 (RSNSLPHSAVSNA). 3 positions are modified to phosphoserine: Ser430, Ser432, and Ser463. The segment covering 468 to 481 (KERHHEKDRKRNHS) has biased composition (basic residues). The tract at residues 468-493 (KERHHEKDRKRNHSMGHISSKSSDKL) is disordered. The WD 5 repeat unit spans residues 529-566 (IAHERLTVLVFLEDCIVTACQEGFICTWARPGKVSKFQ).

As to quaternary structure, interacts with USP12; promotes translocation of USP12/WDR20 to the plasma membrane. Component of the USP12/WDR20/WDR48 deubiquitinating complex. Interacts with USP46; contributes to the cytoplasmic localization of the USP46/WDR20 complex. Component of the USP12/DMWD/WDR48 deubiquitinating complex.

The protein localises to the cytoplasm. The protein resides in the nucleus. In terms of biological role, regulator of deubiquitinating complexes. Activates deubiquitinating activity of complexes containing USP12. Anchors at the base of the ubiquitin-contacting loop of USP12 and remotely modulates the catalytic center of the enzyme. Regulates shuttling of complexes containing USP12 between the plasma membrane, cytoplasm and nucleus. The polypeptide is WD repeat-containing protein 20 (Wdr20) (Mus musculus (Mouse)).